Here is a 234-residue protein sequence, read N- to C-terminus: Mitochondrial assembly of ribosomal large subunit protein 1 (234 aa).

The interval 63–88 (SEPGLEERAEGTVNEGRPESDAADHT) is disordered.

It belongs to the Iojap/RsfS family. As to quaternary structure, associates with the mitochondrial ribosome large subunit (39S) via interaction with MRPL12 and/or MRPL14. The interaction generates steric hindrance that is expected to prevent premature association of the 28S and 39S ribosomal subunits. Interacts with intermediates of the mitochondrial ribosome large subunit (mt-LSU) (recruits the mitochondrial ribosome and complex I assembly factor AltMIEF1 and NDUFAB1); regulates mitochondrial ribosomes assembly. Interacts with MRPL12 and MRPL14.

It is found in the mitochondrion matrix. In terms of biological role, required for normal mitochondrial ribosome function and mitochondrial translation. May play a role in ribosome biogenesis by preventing premature association of the 28S and 39S ribosomal subunits. Interacts with mitochondrial ribosomal protein uL14m (MRPL14), probably blocking formation of intersubunit bridge B8, preventing association of the 28S and 39S ribosomal subunits. Addition to isolated mitochondrial ribosomal subunits partially inhibits translation, probably by interfering with the association of the 28S and 39S ribosomal subunits and the formation of functional ribosomes. May also participate in the assembly and/or regulation of the stability of the large subunit of the mitochondrial ribosome. May function as a ribosomal silencing factor. This Homo sapiens (Human) protein is Mitochondrial assembly of ribosomal large subunit protein 1 (MALSU1).